Here is a 103-residue protein sequence, read N- to C-terminus: UPF0102 protein aq_041 (103 aa).

This sequence belongs to the UPF0102 family.

This Aquifex aeolicus (strain VF5) protein is UPF0102 protein aq_041.